A 260-amino-acid polypeptide reads, in one-letter code: uncharacterized protein (260 aa).

The 228-residue stretch at 4-231 (LHVDHVTHTY…PKELAAMLPF (228 aa)) folds into the ABC transporter domain. 40 to 47 (GPSGCGKT) provides a ligand contact to ATP.

This sequence belongs to the ABC transporter superfamily.

This is an uncharacterized protein from Bacillus subtilis (strain 168).